A 212-amino-acid polypeptide reads, in one-letter code: Pyrrolidone-carboxylate peptidase (212 aa).

Catalysis depends on residues E78, C141, and H165.

Belongs to the peptidase C15 family. As to quaternary structure, homotetramer.

The protein resides in the cytoplasm. It carries out the reaction Release of an N-terminal pyroglutamyl group from a polypeptide, the second amino acid generally not being Pro.. Functionally, removes 5-oxoproline from various penultimate amino acid residues except L-proline. The polypeptide is Pyrrolidone-carboxylate peptidase (Staphylococcus haemolyticus (strain JCSC1435)).